We begin with the raw amino-acid sequence, 784 residues long: E3 UFM1-protein ligase 1 homolog (784 aa).

Residues 405-480 (SVSTQELEDD…RGGGAGNKKA (76 aa)) are disordered. The segment covering 444–454 (KSTKKHQRGKA) has biased composition (basic residues).

Belongs to the UFL1 family.

Functionally, E3 UFM1-protein ligase that mediates ufmylation of target proteins. This chain is E3 UFM1-protein ligase 1 homolog, found in Drosophila yakuba (Fruit fly).